We begin with the raw amino-acid sequence, 164 residues long: S-ribosylhomocysteine lyase (164 aa).

Histidine 61, histidine 65, and cysteine 131 together coordinate Fe cation.

This sequence belongs to the LuxS family. As to quaternary structure, homodimer. Requires Fe cation as cofactor.

The catalysed reaction is S-(5-deoxy-D-ribos-5-yl)-L-homocysteine = (S)-4,5-dihydroxypentane-2,3-dione + L-homocysteine. Involved in the synthesis of autoinducer 2 (AI-2) which is secreted by bacteria and is used to communicate both the cell density and the metabolic potential of the environment. The regulation of gene expression in response to changes in cell density is called quorum sensing. Catalyzes the transformation of S-ribosylhomocysteine (RHC) to homocysteine (HC) and 4,5-dihydroxy-2,3-pentadione (DPD). The sequence is that of S-ribosylhomocysteine lyase from Bifidobacterium longum (strain NCC 2705).